A 249-amino-acid polypeptide reads, in one-letter code: Large ribosomal subunit protein uL4 (249 aa).

It belongs to the universal ribosomal protein uL4 family. In terms of assembly, part of the 50S ribosomal subunit.

Its function is as follows. One of the primary rRNA binding proteins, this protein initially binds near the 5'-end of the 23S rRNA. It is important during the early stages of 50S assembly. It makes multiple contacts with different domains of the 23S rRNA in the assembled 50S subunit and ribosome. Functionally, forms part of the polypeptide exit tunnel. The protein is Large ribosomal subunit protein uL4 of Methanospirillum hungatei JF-1 (strain ATCC 27890 / DSM 864 / NBRC 100397 / JF-1).